A 140-amino-acid chain; its full sequence is 3-hydroxyacyl-[acyl-carrier-protein] dehydratase FabZ (140 aa).

Residue His-48 is part of the active site.

This sequence belongs to the thioester dehydratase family. FabZ subfamily.

The protein localises to the cytoplasm. The catalysed reaction is a (3R)-hydroxyacyl-[ACP] = a (2E)-enoyl-[ACP] + H2O. Its function is as follows. Involved in unsaturated fatty acids biosynthesis. Catalyzes the dehydration of short chain beta-hydroxyacyl-ACPs and long chain saturated and unsaturated beta-hydroxyacyl-ACPs. This Caldicellulosiruptor saccharolyticus (strain ATCC 43494 / DSM 8903 / Tp8T 6331) protein is 3-hydroxyacyl-[acyl-carrier-protein] dehydratase FabZ.